Reading from the N-terminus, the 139-residue chain is Low molecular weight protein-tyrosine-phosphatase PtpB (139 aa).

Cys-7 serves as the catalytic Nucleophile. The active site involves Arg-13. Residue Asp-111 is the Proton donor of the active site.

The protein belongs to the low molecular weight phosphotyrosine protein phosphatase family.

The catalysed reaction is O-phospho-L-tyrosyl-[protein] + H2O = L-tyrosyl-[protein] + phosphate. Inhibited by N-ethylmaleimide and sodium orthovanadate. Functionally, dephosphorylates the phosphotyrosine-containing proteins. The sequence is that of Low molecular weight protein-tyrosine-phosphatase PtpB (ptpB) from Staphylococcus aureus.